Here is a 163-residue protein sequence, read N- to C-terminus: Cyclic pyranopterin monophosphate synthase (163 aa).

Substrate is bound by residues 79–81 (LCH) and 118–119 (ME). Asp-133 is a catalytic residue.

It belongs to the MoaC family. As to quaternary structure, homohexamer; trimer of dimers.

It carries out the reaction (8S)-3',8-cyclo-7,8-dihydroguanosine 5'-triphosphate = cyclic pyranopterin phosphate + diphosphate. The protein operates within cofactor biosynthesis; molybdopterin biosynthesis. Catalyzes the conversion of (8S)-3',8-cyclo-7,8-dihydroguanosine 5'-triphosphate to cyclic pyranopterin monophosphate (cPMP). This Nocardioides sp. (strain ATCC BAA-499 / JS614) protein is Cyclic pyranopterin monophosphate synthase.